The primary structure comprises 55 residues: Large ribosomal subunit protein bL33 (55 aa).

Residues 1–11 (MAKGSREKIKL) are compositionally biased toward basic and acidic residues. The disordered stretch occupies residues 1–32 (MAKGSREKIKLESSASTGHFYTTSKNKRTKPE). Residues 13 to 24 (SSASTGHFYTTS) are compositionally biased toward polar residues.

Belongs to the bacterial ribosomal protein bL33 family.

This chain is Large ribosomal subunit protein bL33, found in Polynucleobacter necessarius subsp. necessarius (strain STIR1).